A 1127-amino-acid polypeptide reads, in one-letter code: Cellulose synthase-like protein D1 (1127 aa).

Residues 1-24 (MASKGILKNGGKPPTAPSSAAPTV) form a disordered region. Transmembrane regions (helical) follow at residues 262 to 282 (VISPYRLLVLIRLVALGLFLM) and 292 to 312 (AIWLWGMSIVCELWFALSWVL). Active-site residues include aspartate 392 and aspartate 828. The next 6 membrane-spanning stretches (helical) occupy residues 910 to 930 (VFLIVYCFLPALSLFSGQFIV), 936 to 956 (TFLTYLLIITITLCLLAMLEI), 982 to 1002 (LAAVLQGLLKVIAGIEISFTL), 1025 to 1045 (SLMIPPLTIIMINLVAIAVGF), 1059 to 1079 (LLGGVFFSFWVLAHLYPFAKG), and 1089 to 1109 (TIVYVWSGLVAITISLLWIAI).

The protein belongs to the glycosyltransferase 2 family. Plant cellulose synthase-like D subfamily.

The protein localises to the golgi apparatus membrane. Thought to be a Golgi-localized beta-glycan synthase that polymerize the backbones of noncellulosic polysaccharides (hemicelluloses) of plant cell wall. The sequence is that of Cellulose synthase-like protein D1 (CSLD1) from Oryza sativa subsp. indica (Rice).